The primary structure comprises 21 residues: Agglutinin beta-1 chain (21 aa).

A compositionally biased stretch (polar residues) spans 1 to 10 (NGPNGKSQSI). The disordered stretch occupies residues 1–21 (NGPNGKSQSIIVGPWGDRVTN).

Belongs to the jacalin lectin family. In terms of assembly, formed of four alpha chains and four beta chains.

Functionally, D-galactose-specific lectin, binds the T-antigen structure Gal-beta1,3-GalNAc. In Maclura pomifera (Osage orange), this protein is Agglutinin beta-1 chain.